The chain runs to 134 residues: DNA-binding protein inhibitor ID-2 (134 aa).

Residues Ser14 and Ser25 each carry the phosphoserine modification. The bHLH domain occupies 23 to 75; it reads SRSKTPVDDPMSLLYNMNDCYSKLKELVPSIPQNKKVTKMEILQHVIDYILDL. The tract at residues 30–83 is interaction with IFI204; it reads DDPMSLLYNMNDCYSKLKELVPSIPQNKKVTKMEILQHVIDYILDLQIALDSHP. The short motif at 106 to 115 is the Nuclear export signal element; the sequence is LNTDISILSL.

In terms of assembly, interacts with GATA4 and NKX2-5. Interacts with NR0B2. Interacts with CLOCK and BMAL1. Interacts with IFI204. Interacts with NEDD9/HEF1. Interacts with ASB4; this interaction promotes ID2 proteasomal degradation. Post-translationally, polyubiquitinated; which is favored by Ifi204 and leads to proteasomal degradation. Ubiquitinated in a ASB4-depedent manner, leading to proteasomal degradation. In terms of processing, phosphorylated in vitro by CDK1, PKA and PKC.

The protein resides in the cytoplasm. It is found in the nucleus. Its function is as follows. Transcriptional regulator (lacking a basic DNA binding domain) which negatively regulates the basic helix-loop-helix (bHLH) transcription factors by forming heterodimers and inhibiting their DNA binding and transcriptional activity. Implicated in regulating a variety of cellular processes, including cellular growth, senescence, differentiation, apoptosis, angiogenesis, and neoplastic transformation. Inhibits skeletal muscle and cardiac myocyte differentiation. Regulates the circadian clock by repressing the transcriptional activator activity of the CLOCK-BMAL1 heterodimer. Restricts the CLOCK and BMAL1 localization to the cytoplasm. Plays a role in both the input and output pathways of the circadian clock: in the input component, is involved in modulating the magnitude of photic entrainment and in the output component, contributes to the regulation of a variety of liver clock-controlled genes involved in lipid metabolism. The protein is DNA-binding protein inhibitor ID-2 (Id2) of Mus musculus (Mouse).